The primary structure comprises 684 residues: Endo-1,4-beta-xylanase A (684 aa).

An N-terminal signal peptide occupies residues 1 to 34; the sequence is MMRSLKSRKLVFILAMLFLINAIVSLKFITYSSA. CBM-cenC domains are found at residues 40 to 190 and 193 to 342; these read KSKY…IKDL and AYVL…ISDE. The 329-residue stretch at 350-678 folds into the GH10 domain; sequence DYNLPSLCEK…KFAFWSLIDP (329 aa). Glu490 serves as the catalytic Proton donor. Glu598 functions as the Nucleophile in the catalytic mechanism.

It belongs to the glycosyl hydrolase 10 (cellulase F) family.

It carries out the reaction Endohydrolysis of (1-&gt;4)-beta-D-xylosidic linkages in xylans.. Its pathway is glycan degradation; xylan degradation. The sequence is that of Endo-1,4-beta-xylanase A (xynA) from Caldicellulosiruptor sp. (strain Rt8B.4).